The sequence spans 707 residues: Choline transporter-like protein 4 (707 aa).

The Cytoplasmic portion of the chain corresponds to 1 to 27 (MASEEYGEPAKHDPSFKGPIKKRGCTD). Residues 28 to 48 (IICCVLFMVFLLGYMVVGILA) form a helical membrane-spanning segment. Residues 49–225 (WLYGDPRQVI…KIFEDFAKSW (177 aa)) are Extracellular-facing. 5 N-linked (GlcNAc...) asparagine glycosylation sites follow: asparagine 62, asparagine 140, asparagine 176, asparagine 191, and asparagine 196. The chain crosses the membrane as a helical span at residues 226 to 246 (PWIITALVIAMVVSLLFLILL). At 247–249 (RFT) the chain is on the cytoplasmic side. A helical membrane pass occupies residues 250-270 (AGILVWVLIVGVIGVIGYGIY). Over 271 to 305 (HCYMEYDTLNKQGVSVSDVGFTFNLGVYFRVKETW) the chain is Extracellular. The chain crosses the membrane as a helical span at residues 306–326 (LAILIVLAVVEAILLLVLLFL). At 327–354 (RKRILIAIALIKEASKAIGHIMSSLFYP) the chain is on the cytoplasmic side. The helical transmembrane segment at 355–375 (LVTFVLLVVCVAYWGMTALYL) threads the bilayer. Over 376–442 (ATSGAPIYRI…TNLFNLQIYN (67 aa)) the chain is Extracellular. N-linked (GlcNAc...) asparagine glycans are attached at residues asparagine 389, asparagine 397, and asparagine 401. Residues 443-463 (VIGFLWCINFVIALGQCVLAG) traverse the membrane as a helical segment. The Cytoplasmic segment spans residues 464–494 (AFASYYWAFHKPKDIPFFPVAESFMRTLRYH). The chain crosses the membrane as a helical span at residues 495-515 (TGSLAFGSLILTIVQLIRIIL). At 516 to 556 (EYVDHKLKGAQNPCTRFLLCCLKCCFWCLEKFIKFLNRNAY) the chain is on the extracellular side. Residues 557 to 577 (IMIAVYGKNFCVSAKNAFKLL) form a helical membrane-spanning segment. At 578-593 (MRNIVRVVVLDKVTDL) the chain is on the cytoplasmic side. The helical transmembrane segment at 594 to 614 (LIFFGKLIVVGGVGVLAFFFF) threads the bilayer. The Extracellular segment spans residues 615–633 (SGRIPIPNDSFKSPTLNYY). N-linked (GlcNAc...) asparagine glycosylation occurs at asparagine 622. The helical transmembrane segment at 634–654 (WIPIITVVLGSYMIAHGFFSV) threads the bilayer. At 655 to 707 (YNMCVDTLFLCFLEDLERNDGSQEKPYYMSKSLMSILNKKNRPPKSEEKKKKK) the chain is on the cytoplasmic side.

The protein belongs to the CTL (choline transporter-like) family.

It localises to the membrane. It is found in the apical cell membrane. It carries out the reaction choline(out) + n H(+)(in) = choline(in) + n H(+)(out). It catalyses the reaction thiamine diphosphate(out) = thiamine diphosphate(in). Its function is as follows. Choline transporter that seems to play a role in the choline-acetylcholine system and is required to the efferent innervation of hair cells in the olivocochlear bundle for the maintenance of physiological function of outer hair cells and the protection of hair cells from acoustic injury. Also described as a thiamine pyrophosphate transporter. Also described as a thiamine pyrophosphate transporter. The sequence is that of Choline transporter-like protein 4 (slc44a4) from Xenopus laevis (African clawed frog).